The following is a 283-amino-acid chain: 1D-myo-inositol 2-acetamido-2-deoxy-alpha-D-glucopyranoside deacetylase (283 aa).

Residues His-7, Asp-10, and His-148 each contribute to the Zn(2+) site.

This sequence belongs to the MshB deacetylase family. Requires Zn(2+) as cofactor.

The catalysed reaction is 1D-myo-inositol 2-acetamido-2-deoxy-alpha-D-glucopyranoside + H2O = 1D-myo-inositol 2-amino-2-deoxy-alpha-D-glucopyranoside + acetate. Catalyzes the deacetylation of 1D-myo-inositol 2-acetamido-2-deoxy-alpha-D-glucopyranoside (GlcNAc-Ins) in the mycothiol biosynthesis pathway. The polypeptide is 1D-myo-inositol 2-acetamido-2-deoxy-alpha-D-glucopyranoside deacetylase (Gordonia bronchialis (strain ATCC 25592 / DSM 43247 / BCRC 13721 / JCM 3198 / KCTC 3076 / NBRC 16047 / NCTC 10667) (Rhodococcus bronchialis)).